We begin with the raw amino-acid sequence, 91 residues long: MSRTIFCTFLQREAEGQDFQLYPGELGKRIYNEISKEAWAQWQHKQTMLINEKKLNMMNAEHRKLLEQEMVNFLFEGKEVHIEGYTPEDKK.

It belongs to the Fe(2+)-trafficking protein family. In terms of assembly, monomer.

In terms of biological role, could be a mediator in iron transactions between iron acquisition and iron-requiring processes, such as synthesis and/or repair of Fe-S clusters in biosynthetic enzymes. In Escherichia coli O7:K1 (strain IAI39 / ExPEC), this protein is Probable Fe(2+)-trafficking protein.